A 514-amino-acid polypeptide reads, in one-letter code: Na(+)/H(+) antiporter NhaB (514 aa).

A run of 12 helical transmembrane segments spans residues 23-43 (LALL…PFIA), 52-72 (IFTL…LLAI), 97-117 (LLLM…LFIF), 120-140 (LLLS…AAAF), 144-164 (FLDA…FYGI), 202-222 (LMMH…VGEP), 238-258 (FFLR…LTCL), 303-323 (ALIG…VGLI), 353-373 (FTAL…QSLF), 391-411 (LFYL…VGTI), 447-467 (ATPN…APLI), and 475-495 (VWMA…CVEF).

The protein belongs to the NhaB Na(+)/H(+) (TC 2.A.34) antiporter family.

The protein localises to the cell inner membrane. The enzyme catalyses 2 Na(+)(in) + 3 H(+)(out) = 2 Na(+)(out) + 3 H(+)(in). Na(+)/H(+) antiporter that extrudes sodium in exchange for external protons. This chain is Na(+)/H(+) antiporter NhaB, found in Escherichia fergusonii (strain ATCC 35469 / DSM 13698 / CCUG 18766 / IAM 14443 / JCM 21226 / LMG 7866 / NBRC 102419 / NCTC 12128 / CDC 0568-73).